Reading from the N-terminus, the 404-residue chain is Tryptophan synthase beta chain (404 aa).

Residue Lys-90 is modified to N6-(pyridoxal phosphate)lysine.

This sequence belongs to the TrpB family. Tetramer of two alpha and two beta chains. Requires pyridoxal 5'-phosphate as cofactor.

It carries out the reaction (1S,2R)-1-C-(indol-3-yl)glycerol 3-phosphate + L-serine = D-glyceraldehyde 3-phosphate + L-tryptophan + H2O. It functions in the pathway amino-acid biosynthesis; L-tryptophan biosynthesis; L-tryptophan from chorismate: step 5/5. Functionally, the beta subunit is responsible for the synthesis of L-tryptophan from indole and L-serine. This Geobacillus stearothermophilus (Bacillus stearothermophilus) protein is Tryptophan synthase beta chain (trpB).